Reading from the N-terminus, the 144-residue chain is Large ribosomal subunit protein uL16 (144 aa).

A compositionally biased stretch (basic residues) spans 1 to 16; sequence MLVPKRVKHRKVQRGH. Residues 1–20 form a disordered region; it reads MLVPKRVKHRKVQRGHMRGE.

It belongs to the universal ribosomal protein uL16 family. In terms of assembly, part of the 50S ribosomal subunit.

Its function is as follows. Binds 23S rRNA and is also seen to make contacts with the A and possibly P site tRNAs. This Limosilactobacillus reuteri (strain DSM 20016) (Lactobacillus reuteri) protein is Large ribosomal subunit protein uL16.